The sequence spans 106 residues: Large ribosomal subunit protein uL22 (106 aa).

Belongs to the universal ribosomal protein uL22 family. Part of the 50S ribosomal subunit.

This protein binds specifically to 23S rRNA; its binding is stimulated by other ribosomal proteins, e.g. L4, L17, and L20. It is important during the early stages of 50S assembly. It makes multiple contacts with different domains of the 23S rRNA in the assembled 50S subunit and ribosome. In terms of biological role, the globular domain of the protein is located near the polypeptide exit tunnel on the outside of the subunit, while an extended beta-hairpin is found that lines the wall of the exit tunnel in the center of the 70S ribosome. The protein is Large ribosomal subunit protein uL22 of Nautilia profundicola (strain ATCC BAA-1463 / DSM 18972 / AmH).